A 197-amino-acid chain; its full sequence is 3-isopropylmalate dehydratase small subunit (197 aa).

This sequence belongs to the LeuD family. LeuD type 1 subfamily. Heterodimer of LeuC and LeuD.

The catalysed reaction is (2R,3S)-3-isopropylmalate = (2S)-2-isopropylmalate. It functions in the pathway amino-acid biosynthesis; L-leucine biosynthesis; L-leucine from 3-methyl-2-oxobutanoate: step 2/4. Catalyzes the isomerization between 2-isopropylmalate and 3-isopropylmalate, via the formation of 2-isopropylmaleate. The protein is 3-isopropylmalate dehydratase small subunit of Mycobacterium sp. (strain JLS).